Consider the following 381-residue polypeptide: MRAVPLHLVGTASLTLGFLLLLSLRLDPGQAKELKFVTLVFRHGDRGPIETFPNDPIKESSWPQGFGQLTKWGMGQHYELGSYIRRRYGRFLNNSYKHDQVYIRSTDVDRTLMSAMTNLAALFPPEGISIWNPRLLWQPIPVHTVSLSEDRLLYLPFRDCPRFQELKSETLKSEEFLKRLQPYKSFIDTLPSLSGFEDQDLFEIWSRLYDPLYCESVHNFTLPTWATEDAMTKLKELSELSLLSLYGIHKQKEKSRLQGGVLVNEILKNMKLATQPQKARKLIMYSAHDTTVSGLQMALDVYNGLLPPYASCHIMELYQDNGGHFVEMYYRNETQNEPYPLTLPGCTHSCPLEKFAELLDPVIPQDWATECMGTSNHQASL.

Positions 1-31 are cleaved as a signal peptide; that stretch reads MRAVPLHLVGTASLTLGFLLLLSLRLDPGQA. Position 42 (Arg42) interacts with substrate. His43 functions as the Nucleophile in the catalytic mechanism. Residue Arg46 coordinates substrate. Residue Asn93 is glycosylated (N-linked (GlcNAc...) asparagine). Arg110 contacts substrate. Disulfide bonds link Cys160/Cys371, Cys214/Cys312, and Cys346/Cys350. Asn219 carries an N-linked (GlcNAc...) asparagine glycan. His288 lines the substrate pocket. Catalysis depends on Asp289, which acts as the Proton donor. An N-linked (GlcNAc...) asparagine glycan is attached at Asn332.

Belongs to the histidine acid phosphatase family. As to quaternary structure, homodimer; dimer formation is required for phosphatase activity. Post-translationally, N-glycosylated. In terms of tissue distribution, expressed in prostate epithelium. Also expressed in the pelvic nerve and sacral spinal cord. Localizes in peptidergic and non-peptidergic nociceptive (pain-sensing) neurons.

Its subcellular location is the secreted. The protein resides in the cell membrane. It localises to the lysosome membrane. It catalyses the reaction a phosphate monoester + H2O = an alcohol + phosphate. The enzyme catalyses a ribonucleoside 5'-phosphate + H2O = a ribonucleoside + phosphate. It carries out the reaction 1-(9Z-octadecenoyl)-sn-glycero-3-phosphate + H2O = 1-(9Z-octadecenoyl)-sn-glycerol + phosphate. The catalysed reaction is O-phospho-L-tyrosyl-[protein] + H2O = L-tyrosyl-[protein] + phosphate. With respect to regulation, inhibited by L(+)-tartrate. In terms of biological role, a non-specific tyrosine phosphatase that dephosphorylates a diverse number of substrates under acidic conditions (pH 4-6) including alkyl, aryl, and acyl orthophosphate monoesters and phosphorylated proteins. Has lipid phosphatase activity and inactivates lysophosphatidic acid in seminal plasma. Functionally, in addition to its tyrosine phosphatase activity, also has ecto-5'-nucleotidase activity in dorsal root ganglion (DRG) neurons. Generates adenosine from AMP. This extracellular adenosine leads to a decrease in chronic pain by activating A1R in nociceptive neurons. The sequence is that of Prostatic acid phosphatase (Acp3) from Rattus norvegicus (Rat).